Consider the following 306-residue polypeptide: Oxygen-dependent coproporphyrinogen-III oxidase (306 aa).

Position 94 (S94) interacts with substrate. 2 residues coordinate a divalent metal cation: H98 and H108. Catalysis depends on H108, which acts as the Proton donor. 110 to 112 (NVR) provides a ligand contact to substrate. 2 residues coordinate a divalent metal cation: H147 and H177. Residues 242–277 (YVEFNLVYDRGTLFGLQTGGRTESILMSMPPLVRWE) are important for dimerization. Residue 260–262 (GGR) coordinates substrate.

It belongs to the aerobic coproporphyrinogen-III oxidase family. In terms of assembly, homodimer. The cofactor is a divalent metal cation.

It localises to the cytoplasm. The enzyme catalyses coproporphyrinogen III + O2 + 2 H(+) = protoporphyrinogen IX + 2 CO2 + 2 H2O. It participates in porphyrin-containing compound metabolism; protoporphyrin-IX biosynthesis; protoporphyrinogen-IX from coproporphyrinogen-III (O2 route): step 1/1. Functionally, involved in the heme biosynthesis. Catalyzes the aerobic oxidative decarboxylation of propionate groups of rings A and B of coproporphyrinogen-III to yield the vinyl groups in protoporphyrinogen-IX. This chain is Oxygen-dependent coproporphyrinogen-III oxidase, found in Shewanella woodyi (strain ATCC 51908 / MS32).